Reading from the N-terminus, the 27-residue chain is Fructokinase (27 aa).

This sequence belongs to the ROK (NagC/XylR) family. As to quaternary structure, homodimer. The cofactor is Mg(2+).

The enzyme catalyses D-fructose + ATP = D-fructose 6-phosphate + ADP + H(+). Inhibition by zinc ions. This is Fructokinase from Fusobacterium mortiferum.